Reading from the N-terminus, the 1397-residue chain is DNA-directed RNA polymerase subunit beta' (1397 aa).

The Zn(2+) site is built by cysteine 75, cysteine 77, cysteine 90, and cysteine 93. Residues aspartate 465, aspartate 467, and aspartate 469 each coordinate Mg(2+). Zn(2+) contacts are provided by cysteine 819, cysteine 893, cysteine 900, and cysteine 903.

This sequence belongs to the RNA polymerase beta' chain family. As to quaternary structure, the RNAP catalytic core consists of 2 alpha, 1 beta, 1 beta' and 1 omega subunit. When a sigma factor is associated with the core the holoenzyme is formed, which can initiate transcription. Mg(2+) serves as cofactor. Zn(2+) is required as a cofactor.

The catalysed reaction is RNA(n) + a ribonucleoside 5'-triphosphate = RNA(n+1) + diphosphate. Functionally, DNA-dependent RNA polymerase catalyzes the transcription of DNA into RNA using the four ribonucleoside triphosphates as substrates. The sequence is that of DNA-directed RNA polymerase subunit beta' from Acinetobacter baumannii (strain SDF).